A 373-amino-acid polypeptide reads, in one-letter code: Chaperone protein DnaJ (373 aa).

A J domain is found at 4–69 (NYYEILEISQ…EKRSIYDRYG (66 aa)). A CR-type zinc finger spans residues 133 to 210 (GCKKKIDFSY…CHGNGYEEIK (78 aa)). 8 residues coordinate Zn(2+): cysteine 146, cysteine 149, cysteine 162, cysteine 165, cysteine 184, cysteine 187, cysteine 198, and cysteine 201. CXXCXGXG motif repeat units lie at residues 146 to 153 (CKSCKGSG), 162 to 169 (CPHCGGKG), 184 to 191 (CDHCKGSG), and 198 to 205 (CKTCHGNG).

This sequence belongs to the DnaJ family. In terms of assembly, homodimer. It depends on Zn(2+) as a cofactor.

It localises to the cytoplasm. In terms of biological role, participates actively in the response to hyperosmotic and heat shock by preventing the aggregation of stress-denatured proteins and by disaggregating proteins, also in an autonomous, DnaK-independent fashion. Unfolded proteins bind initially to DnaJ; upon interaction with the DnaJ-bound protein, DnaK hydrolyzes its bound ATP, resulting in the formation of a stable complex. GrpE releases ADP from DnaK; ATP binding to DnaK triggers the release of the substrate protein, thus completing the reaction cycle. Several rounds of ATP-dependent interactions between DnaJ, DnaK and GrpE are required for fully efficient folding. Also involved, together with DnaK and GrpE, in the DNA replication of plasmids through activation of initiation proteins. In Campylobacter lari (strain RM2100 / D67 / ATCC BAA-1060), this protein is Chaperone protein DnaJ.